The primary structure comprises 140 residues: MGRVRTKTVKKSSRQVIEKYYSRMTLDFHTNKKILEEVAIIPSKRLRNKIAGFSTHLMKRIQKGPVRGISLKLQEEERERRMDFVPDESAIKIDDVKVDKETLEMLASLGMSDIAGISQVETQQAMAPAVFGRPAGRYQR.

The protein belongs to the eukaryotic ribosomal protein eS17 family.

The chain is Small ribosomal subunit protein eS17x (RPS17C) from Arabidopsis thaliana (Mouse-ear cress).